Here is a 380-residue protein sequence, read N- to C-terminus: MANLRKTHPLLKIANDALVDLPAPSNISVWWNFGSLLGLCLAAQILTGLFLAMHYTSDIATAFSSVAHICRDVNYGWLIRSMHANGASFFFICIYLHIGRGLYYGSYLYKETWNIGVILLLLVMMTAFVGYVLPWGQMSFWGATVITNLLSAVPYIGNSLVQWIWGGFSVDNATLTRFFAFHFLFPFVIAAMTMIHLIFLHETGSTNPTGLNSDADKISFHPYFSYKDLLGFAILLIALITLALFSPNLLGDPDNFTPANPLVTPPHIKPEWYFLFAYAILRSIPNKLGGVLALLFSILILMLVPVLHTSKQRALTFRPFSQFLFWLLVANVAILTWIGGMPVEHPFIIIGQIASFLYFFIFLILVPTTGLLENKMLEWQ.

A run of 4 helical transmembrane segments spans residues 33–53 (FGSL…FLAM), 77–98 (WLIR…YLHI), 113–133 (WNIG…GYVL), and 178–198 (FFAF…IHLI). Histidine 83 and histidine 97 together coordinate heme b. Positions 182 and 196 each coordinate heme b. Histidine 201 provides a ligand contact to a ubiquinone. The next 4 membrane-spanning stretches (helical) occupy residues 226-246 (YKDL…ALFS), 288-308 (LGGV…PVLH), 320-340 (FSQF…WIGG), and 347-367 (FIII…ILVP).

It belongs to the cytochrome b family. The cytochrome bc1 complex contains 3 respiratory subunits (MT-CYB, CYC1 and UQCRFS1), 2 core proteins (UQCRC1 and UQCRC2) and probably 6 low-molecular weight proteins. The cofactor is heme b.

Its subcellular location is the mitochondrion inner membrane. Its function is as follows. Component of the ubiquinol-cytochrome c reductase complex (complex III or cytochrome b-c1 complex) that is part of the mitochondrial respiratory chain. The b-c1 complex mediates electron transfer from ubiquinol to cytochrome c. Contributes to the generation of a proton gradient across the mitochondrial membrane that is then used for ATP synthesis. The chain is Cytochrome b (mt-cyb) from Astronotus ocellatus (Oscar).